The chain runs to 231 residues: CLAVATA3/ESR (CLE)-related protein 4B-1 (231 aa).

An N-terminal signal peptide occupies residues 1 to 21 (MATNTMLCLLILSVVLALAFA). The required for secretion from the host cytoplasm to the host apoplasm stretch occupies residues 21-83 (ATNKKGDEEP…SNLLPNNNWM (63 aa)). Residue Asn32 is glycosylated (N-linked (GlcNAc...) asparagine). The interval 116-231 (RKTGMHSQRH…APAGPDPIHH (116 aa)) is disordered. Composition is skewed to basic and acidic residues over residues 125-137 (HHEETTLEQEKRV) and 144-221 (PIHH…EKRG). An A-1 repeat occupies 127–135 (EETTLEQEK). The segment at 127-219 (EETTLEQEKR…HEETTFEQEK (93 aa)) is 5 X approximate repeat A. Residues 136-147 (RVAGAGPDPIHH) form a CLE-1 repeat. The interval 136-231 (RVAGAGPDPI…APAGPDPIHH (96 aa)) is 5 X approximate repeat CLE. An A-2 repeat occupies 148–156 (QDTTLEQEK). A CLE-2 repeat occupies 157-168 (RAVPAGPDPKHH). One copy of the A-3 repeat lies at 169–177 (EETTLEQEK). One copy of the CLE-3 repeat lies at 178-189 (RAVPAGPDPKHH). An A-4 repeat occupies 190–198 (EETTLEQEK). One copy of the CLE-4 repeat lies at 199-210 (RAVPAGPDPKHH). One copy of the A-5 repeat lies at 211–219 (EETTFEQEK). A CLE-5 repeat occupies 220–231 (RGAPAGPDPIHH).

The protein belongs to the CLV3/ESR signal peptide family. Highly expressed exclusively within the dorsal esophageal gland cell during syncytium formation in host plants.

The protein resides in the secreted. It is found in the host cytoplasm. The protein localises to the host extracellular space. It localises to the extracellular space. Its subcellular location is the apoplast. Its function is as follows. Mimics host plant CLE extracellular signal peptides that regulate cell fate. May play a role in the differentiation or division of feeding cells (syncytia) induced in plant roots during infection. In Globodera rostochiensis (Golden nematode worm), this protein is CLAVATA3/ESR (CLE)-related protein 4B-1 (CLE-4B-1).